We begin with the raw amino-acid sequence, 137 residues long: Seminal plasma sperm motility inhibitor (137 aa).

The first 21 residues, Met-1–Thr-21, serve as a signal peptide directing secretion. A disulfide bond links Cys-30 and Cys-51. Positions Cys-30–Ile-131 constitute a CUB domain. The N-linked (GlcNAc...) asparagine glycan is linked to Asn-36.

It belongs to the spermadhesin family. Seminal plasma or sperm.

It is found in the secreted. In terms of biological role, inhibitor of sperm motility. This Sus scrofa (Pig) protein is Seminal plasma sperm motility inhibitor (SPMI).